A 469-amino-acid polypeptide reads, in one-letter code: Acetyl-CoA decarbonylase/synthase complex subunit beta 2 (469 aa).

[Ni-Fe-S] cluster-binding residues include cysteine 187, cysteine 190, cysteine 276, and cysteine 278.

Belongs to the CdhC family. Monomer. The ACDS complex is made up of alpha, epsilon, beta, gamma and delta chains with a probable stoichiometry of (alpha(2)epsilon(2))(4)-beta(8)-(gamma(1)delta(1))(8) (Potential). It depends on [Ni-Fe-S] cluster as a cofactor.

The enzyme catalyses Co(I)-[corrinoid Fe-S protein] + acetyl-CoA + H(+) = methyl-Co(III)-[corrinoid Fe-S protein] + CO + CoA. Part of a complex that catalyzes the reversible cleavage of acetyl-CoA, allowing autotrophic growth from CO(2). The alpha-epsilon complex generates CO from CO(2), while the beta subunit (this protein) combines the CO with CoA and a methyl group to form acetyl-CoA. The methyl group, which is incorporated into acetyl-CoA, is transferred to the beta subunit by a corrinoid iron-sulfur protein (the gamma-delta complex). In Methanocaldococcus jannaschii (strain ATCC 43067 / DSM 2661 / JAL-1 / JCM 10045 / NBRC 100440) (Methanococcus jannaschii), this protein is Acetyl-CoA decarbonylase/synthase complex subunit beta 2 (cdhC2).